Consider the following 140-residue polypeptide: Protein KRTCAP2 homolog (140 aa).

4 helical membrane passes run 11–31, 40–60, 74–94, and 98–118; these read LLSSIISGILSLVIFATLRFC, LNVLVGGYLFSWLFILSLTCV, AKLVPEILFCLSLTVAAAGIV, and CATTSVLFSLVGLYFLNRISI.

This sequence belongs to the KRTCAP2 family. In terms of assembly, component of the oligosaccharyltransferase (OST) complex.

The protein resides in the membrane. Its function is as follows. Subunit of the oligosaccharyl transferase (OST) complex that catalyzes the initial transfer of a defined glycan (Glc(3)Man(9)GlcNAc(2) in eukaryotes) from the lipid carrier dolichol-pyrophosphate to an asparagine residue within an Asn-X-Ser/Thr consensus motif in nascent polypeptide chains, the first step in protein N-glycosylation. N-glycosylation occurs cotranslationally and the complex associates with the Sec61 complex at the channel-forming translocon complex that mediates protein translocation across the endoplasmic reticulum (ER). All subunits are required for a maximal enzyme activity. This chain is Protein KRTCAP2 homolog, found in Drosophila pseudoobscura pseudoobscura (Fruit fly).